The chain runs to 306 residues: GTP cyclohydrolase FolE2 (306 aa).

It belongs to the GTP cyclohydrolase IV family.

The enzyme catalyses GTP + H2O = 7,8-dihydroneopterin 3'-triphosphate + formate + H(+). It functions in the pathway cofactor biosynthesis; 7,8-dihydroneopterin triphosphate biosynthesis; 7,8-dihydroneopterin triphosphate from GTP: step 1/1. In terms of biological role, converts GTP to 7,8-dihydroneopterin triphosphate. This is GTP cyclohydrolase FolE2 from Pseudoalteromonas atlantica (strain T6c / ATCC BAA-1087).